The primary structure comprises 97 residues: Aspartyl/glutamyl-tRNA(Asn/Gln) amidotransferase subunit C (97 aa).

Belongs to the GatC family. Heterotrimer of A, B and C subunits.

The catalysed reaction is L-glutamyl-tRNA(Gln) + L-glutamine + ATP + H2O = L-glutaminyl-tRNA(Gln) + L-glutamate + ADP + phosphate + H(+). It carries out the reaction L-aspartyl-tRNA(Asn) + L-glutamine + ATP + H2O = L-asparaginyl-tRNA(Asn) + L-glutamate + ADP + phosphate + 2 H(+). In terms of biological role, allows the formation of correctly charged Asn-tRNA(Asn) or Gln-tRNA(Gln) through the transamidation of misacylated Asp-tRNA(Asn) or Glu-tRNA(Gln) in organisms which lack either or both of asparaginyl-tRNA or glutaminyl-tRNA synthetases. The reaction takes place in the presence of glutamine and ATP through an activated phospho-Asp-tRNA(Asn) or phospho-Glu-tRNA(Gln). This is Aspartyl/glutamyl-tRNA(Asn/Gln) amidotransferase subunit C from Prochlorococcus marinus (strain MIT 9211).